The following is a 904-amino-acid chain: Alanine--tRNA ligase (904 aa).

Zn(2+) contacts are provided by His584, His588, Cys687, and His691.

It belongs to the class-II aminoacyl-tRNA synthetase family. Zn(2+) is required as a cofactor.

The protein localises to the cytoplasm. It carries out the reaction tRNA(Ala) + L-alanine + ATP = L-alanyl-tRNA(Ala) + AMP + diphosphate. Catalyzes the attachment of alanine to tRNA(Ala) in a two-step reaction: alanine is first activated by ATP to form Ala-AMP and then transferred to the acceptor end of tRNA(Ala). Also edits incorrectly charged Ser-tRNA(Ala) and Gly-tRNA(Ala) via its editing domain. The protein is Alanine--tRNA ligase of Mycobacterium tuberculosis (strain ATCC 25177 / H37Ra).